The sequence spans 249 residues: Chymase (249 aa).

The signal sequence occupies residues 1-19 (MHCLPLTLLLLLLCSRAEA). A propeptide spans 20 to 21 (EE) (activation peptide). Positions 22 to 245 (IIGGTESKPH…YRPWINKVLK (224 aa)) constitute a Peptidase S1 domain. C51 and C67 are joined by a disulfide. Residues H66 and D110 each act as charge relay system in the active site. Intrachain disulfides connect C144–C209 and C175–C188. S203 functions as the Charge relay system in the catalytic mechanism.

Belongs to the peptidase S1 family. Granzyme subfamily.

The protein resides in the secreted. It is found in the cytoplasmic granule. It catalyses the reaction Preferential cleavage: Phe-|-Xaa &gt; Tyr-|-Xaa &gt; Trp-|-Xaa &gt; Leu-|-Xaa.. Major secreted protease of mast cells with suspected roles in vasoactive peptide generation, extracellular matrix degradation, and regulation of gland secretion. In Canis lupus familiaris (Dog), this protein is Chymase (CMA1).